The primary structure comprises 141 residues: Ribosome-binding factor A (141 aa).

Positions 120-141 (DEALRAQSAGARPAGDEDPYKP) are disordered.

This sequence belongs to the RbfA family. In terms of assembly, monomer. Binds 30S ribosomal subunits, but not 50S ribosomal subunits or 70S ribosomes.

Its subcellular location is the cytoplasm. Its function is as follows. One of several proteins that assist in the late maturation steps of the functional core of the 30S ribosomal subunit. Associates with free 30S ribosomal subunits (but not with 30S subunits that are part of 70S ribosomes or polysomes). Required for efficient processing of 16S rRNA. May interact with the 5'-terminal helix region of 16S rRNA. This is Ribosome-binding factor A from Corynebacterium jeikeium (strain K411).